The sequence spans 95 residues: Aspartyl/glutamyl-tRNA(Asn/Gln) amidotransferase subunit C (95 aa).

This sequence belongs to the GatC family. Heterotrimer of A, B and C subunits.

It catalyses the reaction L-glutamyl-tRNA(Gln) + L-glutamine + ATP + H2O = L-glutaminyl-tRNA(Gln) + L-glutamate + ADP + phosphate + H(+). It carries out the reaction L-aspartyl-tRNA(Asn) + L-glutamine + ATP + H2O = L-asparaginyl-tRNA(Asn) + L-glutamate + ADP + phosphate + 2 H(+). Its function is as follows. Allows the formation of correctly charged Asn-tRNA(Asn) or Gln-tRNA(Gln) through the transamidation of misacylated Asp-tRNA(Asn) or Glu-tRNA(Gln) in organisms which lack either or both of asparaginyl-tRNA or glutaminyl-tRNA synthetases. The reaction takes place in the presence of glutamine and ATP through an activated phospho-Asp-tRNA(Asn) or phospho-Glu-tRNA(Gln). The sequence is that of Aspartyl/glutamyl-tRNA(Asn/Gln) amidotransferase subunit C from Nitrobacter winogradskyi (strain ATCC 25391 / DSM 10237 / CIP 104748 / NCIMB 11846 / Nb-255).